We begin with the raw amino-acid sequence, 93 residues long: uncharacterized protein (93 aa).

The protein belongs to the SIMIBI class G3E GTPase family. ArgK/MeaB subfamily.

This is an uncharacterized protein from Streptomyces virginiae (Streptomyces cinnamonensis).